The primary structure comprises 513 residues: Xylose import ATP-binding protein XylG (513 aa).

2 consecutive ABC transporter domains span residues 5–242 (LEMK…VGRE) and 259–505 (LRIE…LRSE). 37 to 44 (GENGSGKS) serves as a coordination point for ATP.

It belongs to the ABC transporter superfamily. Xylose importer (TC 3.A.1.2.4) family. As to quaternary structure, the complex is composed of two ATP-binding proteins (XylG), two transmembrane proteins (XylH) and a solute-binding protein (XylF).

It localises to the cell inner membrane. The enzyme catalyses D-xylose(out) + ATP + H2O = D-xylose(in) + ADP + phosphate + H(+). In terms of biological role, part of the ABC transporter complex XylFGH involved in xylose import. Responsible for energy coupling to the transport system. The protein is Xylose import ATP-binding protein XylG of Shigella flexneri serotype 5b (strain 8401).